Consider the following 137-residue polypeptide: Large ribosomal subunit protein uL16 (137 aa).

The protein belongs to the universal ribosomal protein uL16 family. As to quaternary structure, part of the 50S ribosomal subunit.

Binds 23S rRNA and is also seen to make contacts with the A and possibly P site tRNAs. The chain is Large ribosomal subunit protein uL16 from Leuconostoc mesenteroides subsp. mesenteroides (strain ATCC 8293 / DSM 20343 / BCRC 11652 / CCM 1803 / JCM 6124 / NCDO 523 / NBRC 100496 / NCIMB 8023 / NCTC 12954 / NRRL B-1118 / 37Y).